A 660-amino-acid chain; its full sequence is Bifunctional polymyxin resistance protein ArnA (660 aa).

The segment at methionine 1 to leucine 304 is formyltransferase ArnAFT. A (6R)-10-formyltetrahydrofolate-binding site is contributed by histidine 86–isoleucine 88. Histidine 104 (proton donor; for formyltransferase activity) is an active-site residue. (6R)-10-formyltetrahydrofolate contacts are provided by residues arginine 114 and valine 136–aspartate 140. The interval arginine 314 to serine 660 is dehydrogenase ArnADH. Residues aspartate 347 and aspartate 368–isoleucine 369 contribute to the NAD(+) site. Residues alanine 393, tyrosine 398, and threonine 432 to serine 433 each bind UDP-alpha-D-glucuronate. Residue glutamate 434 is the Proton acceptor; for decarboxylase activity of the active site. UDP-alpha-D-glucuronate is bound by residues arginine 460, asparagine 492, lysine 526–arginine 535, and tyrosine 613. Residue arginine 619 is the Proton donor; for decarboxylase activity of the active site.

In the N-terminal section; belongs to the Fmt family. UDP-L-Ara4N formyltransferase subfamily. The protein in the C-terminal section; belongs to the NAD(P)-dependent epimerase/dehydratase family. UDP-glucuronic acid decarboxylase subfamily. In terms of assembly, homohexamer, formed by a dimer of trimers.

It carries out the reaction UDP-alpha-D-glucuronate + NAD(+) = UDP-beta-L-threo-pentopyranos-4-ulose + CO2 + NADH. The catalysed reaction is UDP-4-amino-4-deoxy-beta-L-arabinose + (6R)-10-formyltetrahydrofolate = UDP-4-deoxy-4-formamido-beta-L-arabinose + (6S)-5,6,7,8-tetrahydrofolate + H(+). Its pathway is nucleotide-sugar biosynthesis; UDP-4-deoxy-4-formamido-beta-L-arabinose biosynthesis; UDP-4-deoxy-4-formamido-beta-L-arabinose from UDP-alpha-D-glucuronate: step 1/3. It participates in nucleotide-sugar biosynthesis; UDP-4-deoxy-4-formamido-beta-L-arabinose biosynthesis; UDP-4-deoxy-4-formamido-beta-L-arabinose from UDP-alpha-D-glucuronate: step 3/3. It functions in the pathway bacterial outer membrane biogenesis; lipopolysaccharide biosynthesis. Its function is as follows. Bifunctional enzyme that catalyzes the oxidative decarboxylation of UDP-glucuronic acid (UDP-GlcUA) to UDP-4-keto-arabinose (UDP-Ara4O) and the addition of a formyl group to UDP-4-amino-4-deoxy-L-arabinose (UDP-L-Ara4N) to form UDP-L-4-formamido-arabinose (UDP-L-Ara4FN). The modified arabinose is attached to lipid A and is required for resistance to polymyxin and cationic antimicrobial peptides. This Shigella flexneri serotype 5b (strain 8401) protein is Bifunctional polymyxin resistance protein ArnA.